The sequence spans 348 residues: Spermidine/putrescine import ATP-binding protein PotA (348 aa).

An ABC transporter domain is found at 6-236; it reads IRLVNVTKEY…PKNVFVADFI (231 aa). 38–45 lines the ATP pocket; that stretch reads GPSGCGKT.

It belongs to the ABC transporter superfamily. Spermidine/putrescine importer (TC 3.A.1.11.1) family. As to quaternary structure, the complex is composed of two ATP-binding proteins (PotA), two transmembrane proteins (PotB and PotC) and a solute-binding protein (PotD).

It is found in the cell membrane. The catalysed reaction is ATP + H2O + polyamine-[polyamine-binding protein]Side 1 = ADP + phosphate + polyamineSide 2 + [polyamine-binding protein]Side 1.. Part of the ABC transporter complex PotABCD involved in spermidine/putrescine import. Responsible for energy coupling to the transport system. This chain is Spermidine/putrescine import ATP-binding protein PotA, found in Desulfitobacterium hafniense (strain Y51).